We begin with the raw amino-acid sequence, 753 residues long: Oligopeptide transporter 5 (753 aa).

15 consecutive transmembrane segments (helical) span residues 56 to 76, 80 to 100, 132 to 152, 163 to 183, 224 to 244, 296 to 316, 368 to 388, 432 to 452, 461 to 481, 506 to 528, 544 to 564, 583 to 603, 615 to 635, 662 to 682, and 695 to 715; these read TWFL…FFGY, PLTV…KLMA, ITIF…LTIV, AAAM…AGMF, FFLI…YLFP, FFAI…ILPI, YLSI…TATI, WWFV…CEGF, WGLL…GVIL, PLAN…YFVG, FIVQ…TTWW, PWTC…GIIG, PGMN…WFFA, AKAV…YYIF, and ILSA…YFAL.

This sequence belongs to the oligopeptide OPT transporter (TC 2.A.67.1) family. In terms of tissue distribution, expressed predominantly in flowers, and at a very low level in leaves and roots.

It is found in the membrane. In terms of biological role, involved in the translocation of tetra- and pentapeptides across the cellular membrane in an energy-dependent manner. The protein is Oligopeptide transporter 5 (OPT5) of Arabidopsis thaliana (Mouse-ear cress).